The primary structure comprises 405 residues: Tryptophan synthase beta chain (405 aa).

K98 carries the N6-(pyridoxal phosphate)lysine modification.

This sequence belongs to the TrpB family. Tetramer of two alpha and two beta chains. Pyridoxal 5'-phosphate serves as cofactor.

The catalysed reaction is (1S,2R)-1-C-(indol-3-yl)glycerol 3-phosphate + L-serine = D-glyceraldehyde 3-phosphate + L-tryptophan + H2O. It functions in the pathway amino-acid biosynthesis; L-tryptophan biosynthesis; L-tryptophan from chorismate: step 5/5. In terms of biological role, the beta subunit is responsible for the synthesis of L-tryptophan from indole and L-serine. The sequence is that of Tryptophan synthase beta chain from Bradyrhizobium diazoefficiens (strain JCM 10833 / BCRC 13528 / IAM 13628 / NBRC 14792 / USDA 110).